Consider the following 218-residue polypeptide: MGGYRTDDEYDYLFKLVLIGDSGVGKSNLLSRFTKNEFNLESKSTIGVEFATKTLNVDAKVVKAQIWDTAGQERYRAITSAYYRGAVGALLVYDVTRRATFENAARWLKELRDHTDPNIVVMLIGNKSDLRHLVAVPTEDGKSFAERESLYFMETSALEATNVENAFTEVLTQIYRIVSKRAVEAGDSGSSSGLPSKGQTINVKEDSSVLKRFGCCST.

20–27 (GDSGVGKS) is a binding site for GTP. Residues 42–50 (SKSTIGVEF) carry the Effector region motif. Residues 68 to 72 (DTAGQ) and 126 to 129 (NKSD) each bind GTP. 2 S-geranylgeranyl cysteine lipidation sites follow: Cys-215 and Cys-216.

It belongs to the small GTPase superfamily. Rab family.

The protein resides in the cell membrane. The chain is Ras-related protein Rab11D (RAB11D) from Lotus japonicus (Lotus corniculatus var. japonicus).